Here is a 473-residue protein sequence, read N- to C-terminus: H(+)/Cl(-) exchange transporter ClcA (473 aa).

The Cytoplasmic segment spans residues 1–32; it reads MKTDTSTFLAQQIVRLRRRDQIRRLMQRDKTP. A helical transmembrane segment spans residues 33-69; the sequence is LAILFMAAVVGTLTGLVGVAFEKAVSWVQNMRIGALV. Topologically, residues 70-76 are periplasmic; the sequence is QVADHAF. The helical transmembrane segment at 77–100 threads the bilayer; it reads LLWPLAFILSALLAMVGYFLVRKF. Residues 106 to 110 carry the Selectivity filter part_1 motif; it reads GSGIP. Serine 107 is a chloride binding site. Residues 109–116 constitute an intramembrane region (helical); the sequence is IPEIEGAL. Topologically, residues 117-123 are cytoplasmic; the sequence is EELRPVR. Helical transmembrane passes span 124 to 141 and 148 to 166; these read WWRVLPVKFIGGMGTLGA and EGPTVQIGGNLGRMVLDVF. The Selectivity filter part_2 motif lies at 146 to 150; the sequence is GREGP. At 167–176 the chain is on the cytoplasmic side; it reads RMRSAEARHT. An intramembrane region (helical) is located at residues 177 to 189; it reads LLATGAAAGLSAA. The note=Loop between two helices intramembrane region spans 190–192; sequence FNA. The segment at residues 193-201 is an intramembrane region (helical); that stretch reads PLAGILFII. Topologically, residues 202–214 are cytoplasmic; it reads EEMRPQFRYNLIS. A helical membrane pass occupies residues 215 to 232; sequence IKAVFTGVIMSSIVFRIF. The Periplasmic portion of the chain corresponds to 233 to 252; the sequence is NGEAPIIEVGKLSDAPVNTL. Residues 253-281 traverse the membrane as a helical segment; sequence WLYLILGIIFGCVGPVFNSLVLRTQDMFQ. Over 282–287 the chain is Cytoplasmic; the sequence is RFHGGE. Residues 288-308 form a helical membrane-spanning segment; that stretch reads IKKWVLMGGAIGGLCGILGLI. The Periplasmic portion of the chain corresponds to 309 to 329; it reads EPAAAGGGFNLIPIAAAGNFS. A helical transmembrane segment spans residues 330 to 349; the sequence is VGLLLFIFITRVVTTLLCFS. Residues 350–354 are Cytoplasmic-facing; sequence SGAPG. Positions 355–359 match the Selectivity filter part_3 motif; the sequence is GIFAP. Residues 355–378 form a helical membrane-spanning segment; sequence GIFAPMLALGTLLGTAFGMAAAVL. Residues isoleucine 356 and phenylalanine 357 each coordinate chloride. The Periplasmic portion of the chain corresponds to 379 to 386; that stretch reads FPQYHLEA. An intramembrane region (helical) is located at residues 387 to 401; that stretch reads GTFAIAGMGALMAAS. The segment at residues 402–404 is an intramembrane region (note=Loop between two helices); that stretch reads VRA. Positions 405–416 form an intramembrane region, helical; the sequence is PLTGIVLVLEMT. The segment at residues 417-421 is an intramembrane region (note=Loop between two helices); the sequence is DNYQL. The helical transmembrane segment at 422-438 threads the bilayer; it reads ILPMIITCLGATLLAQF. The Cytoplasmic segment spans residues 439 to 473; it reads LGGKPLYSTILARTLAKQDAEQAEKNQNAPADENT. Tyrosine 445 provides a ligand contact to chloride.

This sequence belongs to the chloride channel (TC 2.A.49) family. ClcA subfamily. As to quaternary structure, homodimer.

Its subcellular location is the cell inner membrane. It carries out the reaction 2 chloride(in) + H(+)(out) = 2 chloride(out) + H(+)(in). In terms of biological role, proton-coupled chloride transporter. Functions as antiport system and exchanges two chloride ions for 1 proton. Probably acts as an electrical shunt for an outwardly-directed proton pump that is linked to amino acid decarboxylation, as part of the extreme acid resistance (XAR) response. The chain is H(+)/Cl(-) exchange transporter ClcA (clcA) from Salmonella typhimurium (strain LT2 / SGSC1412 / ATCC 700720).